The chain runs to 330 residues: PTS system mannose-specific EIIAB component (330 aa).

A PTS EIIA type-4 domain is found at 2–130 (GIGIIIASHG…NIIKESKDGI (129 aa)). The Tele-phosphohistidine intermediate; for EIIA activity role is filled by His10. His10 carries the phosphohistidine; by HPr modification. Positions 143–161 (TAATEKVVNALQGAIPAGT) are hinge. Residues 166-330 (GKLKINLARV…FELIQKANIK (165 aa)) form the PTS EIIB type-4 domain. The active-site Pros-phosphohistidine intermediate; for EIIB activity is the His181. His181 carries the post-translational modification Phosphohistidine; by EIIA.

In terms of assembly, homodimer.

The protein resides in the cytoplasm. The protein localises to the cell membrane. It carries out the reaction D-mannose(out) + N(pros)-phospho-L-histidyl-[protein] = D-mannose 6-phosphate(in) + L-histidyl-[protein]. Functionally, the phosphoenolpyruvate-dependent sugar phosphotransferase system (sugar PTS), a major carbohydrate active transport system, catalyzes the phosphorylation of incoming sugar substrates concomitantly with their translocation across the cell membrane. The enzyme II ManXYZ PTS system is involved in mannose transport. The sequence is that of PTS system mannose-specific EIIAB component from Streptococcus pyogenes serotype M6 (strain ATCC BAA-946 / MGAS10394).